The following is a 316-amino-acid chain: Acetyl-coenzyme A carboxylase carboxyl transferase subunit alpha (316 aa).

Residues 39-293 (RLQDKSKALT…RGELLAQLKM (255 aa)) enclose the CoA carboxyltransferase C-terminal domain.

Belongs to the AccA family. In terms of assembly, acetyl-CoA carboxylase is a heterohexamer composed of biotin carboxyl carrier protein (AccB), biotin carboxylase (AccC) and two subunits each of ACCase subunit alpha (AccA) and ACCase subunit beta (AccD).

The protein localises to the cytoplasm. It catalyses the reaction N(6)-carboxybiotinyl-L-lysyl-[protein] + acetyl-CoA = N(6)-biotinyl-L-lysyl-[protein] + malonyl-CoA. The protein operates within lipid metabolism; malonyl-CoA biosynthesis; malonyl-CoA from acetyl-CoA: step 1/1. Component of the acetyl coenzyme A carboxylase (ACC) complex. First, biotin carboxylase catalyzes the carboxylation of biotin on its carrier protein (BCCP) and then the CO(2) group is transferred by the carboxyltransferase to acetyl-CoA to form malonyl-CoA. In Pseudomonas aeruginosa (strain UCBPP-PA14), this protein is Acetyl-coenzyme A carboxylase carboxyl transferase subunit alpha.